A 108-amino-acid polypeptide reads, in one-letter code: uncharacterized protein (108 aa).

A compositionally biased stretch (polar residues) spans 1 to 10; that stretch reads MSGISLTPVK. 2 disordered regions span residues 1 to 63 and 83 to 108; these read MSGI…RPPR and VLSPRYDLSDEPHAPGTTMISGPRTQ. Residues 33–62 show a composition bias toward basic and acidic residues; sequence YVDRARPSADAKEHCAASDPEEWHSGDRPP.

This is an uncharacterized protein from Gallid herpesvirus 2 (strain Chicken/Md5/ATCC VR-987) (GaHV-2).